Reading from the N-terminus, the 270-residue chain is tRNA pseudouridine synthase A (270 aa).

D52 functions as the Nucleophile in the catalytic mechanism. Position 110 (Y110) interacts with substrate. Positions 251–270 (TGAADEPAAPHGVTETRMQL) are disordered.

The protein belongs to the tRNA pseudouridine synthase TruA family. In terms of assembly, homodimer.

The catalysed reaction is uridine(38/39/40) in tRNA = pseudouridine(38/39/40) in tRNA. Its function is as follows. Formation of pseudouridine at positions 38, 39 and 40 in the anticodon stem and loop of transfer RNAs. This is tRNA pseudouridine synthase A from Roseiflexus sp. (strain RS-1).